We begin with the raw amino-acid sequence, 89 residues long: Small ribosomal subunit protein uS15 (89 aa).

Belongs to the universal ribosomal protein uS15 family. As to quaternary structure, part of the 30S ribosomal subunit. Forms a bridge to the 50S subunit in the 70S ribosome, contacting the 23S rRNA.

In terms of biological role, one of the primary rRNA binding proteins, it binds directly to 16S rRNA where it helps nucleate assembly of the platform of the 30S subunit by binding and bridging several RNA helices of the 16S rRNA. Functionally, forms an intersubunit bridge (bridge B4) with the 23S rRNA of the 50S subunit in the ribosome. The protein is Small ribosomal subunit protein uS15 of Corynebacterium efficiens (strain DSM 44549 / YS-314 / AJ 12310 / JCM 11189 / NBRC 100395).